The chain runs to 83 residues: Toxin BmKBT (83 aa).

Residues 1 to 19 (MKAALLLVIFSLMLIGVLT) form the signal peptide. One can recognise an LCN-type CS-alpha/beta domain in the interval 21-81 (KSGYPTDHEG…TWSRATNKCR (61 aa)). 4 disulfides stabilise this stretch: Cys31–Cys80, Cys35–Cys54, Cys41–Cys61, and Cys45–Cys63. Residue Lys83 is a propeptide, removed by a carboxypeptidase.

It belongs to the long (4 C-C) scorpion toxin superfamily. Sodium channel inhibitor family. Beta subfamily. In terms of tissue distribution, expressed by the venom gland.

It localises to the secreted. In terms of biological role, this toxin increases the peak sodium current, slows down the inactivation of sodium channels (Nav), and prolongs the action potential of dorsal root ganglion neurons, which indicates that it behaves as a classical alpha-toxin. It binds to mammal brain and insect sodium channels, but with a different manner. This peptide may bind to a distinct receptor site on mammal brain sodium channels, which is unconnected with that for BmKAS (a beta-toxin), BmKIT2 (a beta-toxin) or BmK I (an alpha toxin). In contrast, the receptor site for BmKabT on insect sodium channels might be closely related to that for the beta-insect depressant toxin BmKIT2. Possesses potent toxicity in mice but induces only paralysis in cotton bollworm. This chain is Toxin BmKBT, found in Olivierus martensii (Manchurian scorpion).